A 513-amino-acid chain; its full sequence is Bifunctional pantoate ligase/cytidylate kinase (513 aa).

Residues 1 to 283 (MVQVFRTIAG…VGSTRLIDNL (283 aa)) form a pantoate--beta-alanine ligase region. Position 30–37 (30–37 (MGSLHAGH)) interacts with ATP. The active-site Proton donor is the His-37. Position 61 (Gln-61) interacts with (R)-pantoate. Residue Gln-61 coordinates beta-alanine. Residue 150 to 153 (GAKD) coordinates ATP. A (R)-pantoate-binding site is contributed by Gln-156. ATP is bound by residues Val-179 and 187-190 (MSSR). The segment at 284–513 (VLNHRLPIIA…IELYKKYNKG (230 aa)) is cytidylate kinase.

It in the N-terminal section; belongs to the pantothenate synthetase family. The protein in the C-terminal section; belongs to the cytidylate kinase family. Type 1 subfamily.

It localises to the cytoplasm. The catalysed reaction is (R)-pantoate + beta-alanine + ATP = (R)-pantothenate + AMP + diphosphate + H(+). It carries out the reaction CMP + ATP = CDP + ADP. It catalyses the reaction dCMP + ATP = dCDP + ADP. It functions in the pathway cofactor biosynthesis; (R)-pantothenate biosynthesis; (R)-pantothenate from (R)-pantoate and beta-alanine: step 1/1. Catalyzes the condensation of pantoate with beta-alanine in an ATP-dependent reaction via a pantoyl-adenylate intermediate. Functionally, catalyzes the transfer of a phosphate group from ATP to either CMP or dCMP to form CDP or dCDP and ADP, respectively. In Synechocystis sp. (strain ATCC 27184 / PCC 6803 / Kazusa), this protein is Bifunctional pantoate ligase/cytidylate kinase.